The sequence spans 784 residues: MGSGDWDEIKRLAADFQKAQLTSTLQKLSERNCVEIVTLLLEKQMLEVVFTNDGKEYITPDHLEREIQDELYVNGGRANLVEVSKTLNVDLSRIEVLAERIAAENPSVHLVLGQLIDEDYISHIAQEINEKLVLRGEISISELASQFDLPSDFLQHDVVEKHLGKIIKGRQDASNPRVFFTQAYIQRCKAKIRGALAAITRPINVAVILQQIGVQEKIFHSLLDEIAPAGQVTSKLANSQYVPLIYAKTQADWVNSFYKQNSFLEYDAIQKLGISDAKSYIRKQFPNEEFLFLKRVALGARLVELTVVTALNECSATKQYLDLTTILPSNLSEEDIEEVFSTIMGQKHSNPNNFVYLDSIVFSQPYLAQLVQPCQALAESQAKAAVDGGVYQQYIVEKTLAQKGSVSTQELEDDGKVDKRDERRKKASSGKAGGGAQGRETKTKSTKKHQRGKAAAHNDSDDEDDVQQSSRGGGAGNKKAMKPLELVKTADIVKLITASLEEEGLEHLAKPISALYTNQFNQTALARAQELFEATPQTNRRQTHAAIQDRINTFLIDIRLYEKGLKLFPLETQTQLVKYLLKSLGNDICNELSLYVAGECNLTVKNTNLNVDQRIKLAQECEVQYRASLLEQNKALNKTIDEFELATETVLKACSMIIKKVDKKKDRLLIADHKKKLQNQLLECQEPALLLHLAVLILFTTITGSILHASGKFVSAILQHIRGSLNDEQNALLLRYHDLVLQVLQATPDSSESKVANEHLQAMQVQVVELAQNFSRASVFKADC.

Residues 405–480 form a disordered region; that stretch reads SVSTQELEDD…RGGGAGNKKA (76 aa). Positions 444–454 are enriched in basic residues; it reads KSTKKHQRGKA.

Belongs to the UFL1 family.

E3 UFM1-protein ligase that mediates ufmylation of target proteins. The protein is E3 UFM1-protein ligase 1 homolog of Drosophila yakuba (Fruit fly).